The chain runs to 264 residues: Versicolorin reductase stcU (264 aa).

Residues I23, D69, N96, and R129 each coordinate NADP(+). Active-site proton donor residues include S145 and S146. NADP(+) contacts are provided by Y160, K164, I193, and T195. The Proton acceptor role is filled by Y160. K164 functions as the Lowers pKa of active site Tyr in the catalytic mechanism.

Belongs to the short-chain dehydrogenases/reductases (SDR) family.

It carries out the reaction (4S,8R)-2,13,16,20-tetrahydroxy-7,9-dioxapentacyclo[10.8.0.0(3,10).0(4,8).0(14,19)]icosa-1(12),2,5,10,13,16,19-heptaen-18-one + NADPH + H(+) = (4S,8R,16R)-2,13,16,20-tetrahydroxy-7,9-dioxapentacyclo[10.8.0.0(3,10).0(4,8).0(14,19)]icosa-1(12),2,5,10,13,19-hexaen-18-one + NADP(+). The protein operates within mycotoxin biosynthesis; sterigmatocystin biosynthesis. Its function is as follows. Versicolorin reductase; part of the gene cluster that mediates the biosynthesis of sterigmatocystin (ST), a polyketide-derived furanocoumarin which is part of the most toxic and carcinogenic compounds among the known mycotoxins. The first step in the biosynthesis of sterigmatocystin is the production of hexanoate by the fatty acid synthase (FAS) units stcJ and stcK. The polyketide backbone is assembled by the non-reducing polyketide synthase stcA by condensation of the starter hexanoyl-CoA and 7 malonyl-CoA extender units followed by cyclization and release of norsolorinic acid. Norsolorinic acid is the first stable intermediate in the biosynthesis of sterigmatocystin and is converted into averantin (AVN) by the ketoreductase stcE which reduces the hexanoate ketone to an alcohol. Averantin is then oxidized into 5'-hydroxyaverantin (HAVN) by the cytochrome P450 monooxygenase stcF. 5'-hydroxyaverantin is further converted to 5'-oxyaverantin (OAVN) by the 5'-hydroxyaverantin dehydrogenase stcG. The next step is the conversion of OAVN into averufin (AVF) which is catalyzed by a yet to be identified enzyme. The cytochrome P450 monooxygenase stcB and the flavin-binding monooxygenase stcW are both required for the conversion of averufin to 1-hydroxyversicolorone. The esterase stcI probably catalyzes the formation of versiconal hemiacetal acetate from 1-hydroxyversicolorone. The oxydoreductase stcN then probably catalyzes the biosynthetic step from versiconal to versicolorin B (VERB). The next step is performed by the versicolorin B desaturase stcL to produce versicolorin A (VERA). The ketoreductase stcU and the cytochrome P450 monooxygenase stcS are involved in the conversion of versicolorin A to demethylsterigmatocystin. The Baeyer-Villiger oxidas stcQ and the reductase stcR might be involved in the biosynthetic step from versicolorin A to demethylsterigmatocystin. The final step in the biosynthesis of sterigmatocystin is the methylation of demethylsterigmatocystin catalyzed by the methyltransferase stcP. The chain is Versicolorin reductase stcU from Emericella nidulans (strain FGSC A4 / ATCC 38163 / CBS 112.46 / NRRL 194 / M139) (Aspergillus nidulans).